The primary structure comprises 513 residues: CUGBP Elav-like family member 2 (513 aa).

3 RRM domains span residues 35–118 (IKMF…PADS), 127–207 (RKLF…FADT), and 428–506 (ANLF…LKRS).

This sequence belongs to the CELF/BRUNOL family.

It localises to the nucleus. Its subcellular location is the cytoplasm. RNA-binding protein implicated in the regulation of several post-transcriptional events. May be involved in pre-mRNA alternative splicing, mRNA translation repression and stability. In Xenopus tropicalis (Western clawed frog), this protein is CUGBP Elav-like family member 2 (celf2).